The following is a 53-amino-acid chain: UPF0391 membrane protein SG0393 (53 aa).

2 helical membrane passes run 4-24 (WGII…GGLA) and 27-47 (AAWA…ISLF).

The protein belongs to the UPF0391 family.

It is found in the cell membrane. The polypeptide is UPF0391 membrane protein SG0393 (Sodalis glossinidius (strain morsitans)).